We begin with the raw amino-acid sequence, 305 residues long: Auxin-responsive protein IAA27 (305 aa).

An EAR-like (transcriptional repression) motif is present at residues 45–49 (LRLGL). 2 disordered regions span residues 96 to 119 (TTATGDVGSGSGPRTSVVKDGKST) and 155 to 180 (KNSMASSQSQKPGNNSETEEAEAKSG). Residues 155–170 (KNSMASSQSQKPGNNS) are compositionally biased toward polar residues. A PB1 domain is found at 185–287 (CLYVKVSMEG…SCKKLRIMKS (103 aa)).

Belongs to the Aux/IAA family. Homodimers and heterodimers. Interacts with phytochrome A. Interacts with TPL.

Its subcellular location is the nucleus. In terms of biological role, aux/IAA proteins are short-lived transcriptional factors that function as repressors of early auxin response genes at low auxin concentrations. Repression is thought to result from the interaction with auxin response factors (ARFs), proteins that bind to the auxin-responsive promoter element (AuxRE). Formation of heterodimers with ARF proteins may alter their ability to modulate early auxin response genes expression. The polypeptide is Auxin-responsive protein IAA27 (IAA27) (Arabidopsis thaliana (Mouse-ear cress)).